The sequence spans 552 residues: CTP synthase (552 aa).

The segment at 1-273 (MSESKKNPET…LTPIARRFNM (273 aa)) is amidoligase domain. Ser21 contributes to the CTP binding site. Residue Ser21 participates in UTP binding. Residues 22–27 (SLGKGI) and Asp79 contribute to the ATP site. Mg(2+) contacts are provided by Asp79 and Glu147. CTP-binding positions include 154–156 (DIE), 194–199 (KTKPTQ), and Lys230. Residues 194 to 199 (KTKPTQ) and Lys230 contribute to the UTP site. Residues 298–548 (TIAFVGKYLS…IQKSLELKKV (251 aa)) enclose the Glutamine amidotransferase type-1 domain. L-glutamine is bound at residue Gly359. Cys386 acts as the Nucleophile; for glutamine hydrolysis in catalysis. L-glutamine contacts are provided by residues 387 to 390 (LGMQ), Glu410, and Arg478. Residues His521 and Glu523 contribute to the active site.

Belongs to the CTP synthase family. Homotetramer.

The enzyme catalyses UTP + L-glutamine + ATP + H2O = CTP + L-glutamate + ADP + phosphate + 2 H(+). It catalyses the reaction L-glutamine + H2O = L-glutamate + NH4(+). It carries out the reaction UTP + NH4(+) + ATP = CTP + ADP + phosphate + 2 H(+). It participates in pyrimidine metabolism; CTP biosynthesis via de novo pathway; CTP from UDP: step 2/2. Allosterically activated by GTP, when glutamine is the substrate; GTP has no effect on the reaction when ammonia is the substrate. The allosteric effector GTP functions by stabilizing the protein conformation that binds the tetrahedral intermediate(s) formed during glutamine hydrolysis. Inhibited by the product CTP, via allosteric rather than competitive inhibition. Functionally, catalyzes the ATP-dependent amination of UTP to CTP with either L-glutamine or ammonia as the source of nitrogen. Regulates intracellular CTP levels through interactions with the four ribonucleotide triphosphates. This is CTP synthase from Wolinella succinogenes (strain ATCC 29543 / DSM 1740 / CCUG 13145 / JCM 31913 / LMG 7466 / NCTC 11488 / FDC 602W) (Vibrio succinogenes).